The primary structure comprises 323 residues: NADH-cytochrome b5 reductase 2 (323 aa).

The chain crosses the membrane as a helical span at residues 32–48 (LAPIYVAVGLTGLGVGL). The 106-residue stretch at 72-177 (QGWVDLKLAQ…KGPIPKYPWE (106 aa)) folds into the FAD-binding FR-type domain. 180–215 (KHKHICLIAGGTGITPMYQLARKIFKDPEDQTKVTL) lines the FAD pocket.

It belongs to the flavoprotein pyridine nucleotide cytochrome reductase family. FAD serves as cofactor.

Its subcellular location is the mitochondrion outer membrane. The catalysed reaction is 2 Fe(III)-[cytochrome b5] + NADH = 2 Fe(II)-[cytochrome b5] + NAD(+) + H(+). Its function is as follows. May mediate the reduction of outer membrane cytochrome b5. The sequence is that of NADH-cytochrome b5 reductase 2 (mcr1) from Neosartorya fischeri (strain ATCC 1020 / DSM 3700 / CBS 544.65 / FGSC A1164 / JCM 1740 / NRRL 181 / WB 181) (Aspergillus fischerianus).